Consider the following 99-residue polypeptide: uncharacterized protein (99 aa).

Residues 3 to 68 (ERLKAITNLL…EKFDSNRKFY (66 aa)) are a coiled coil.

This is an uncharacterized protein from Aquifex aeolicus (strain VF5).